We begin with the raw amino-acid sequence, 88 residues long: Exodeoxyribonuclease 7 small subunit (88 aa).

The segment at 69–88 (ALAEEADPEDGASGADGGGA) is disordered.

This sequence belongs to the XseB family. As to quaternary structure, heterooligomer composed of large and small subunits.

Its subcellular location is the cytoplasm. The enzyme catalyses Exonucleolytic cleavage in either 5'- to 3'- or 3'- to 5'-direction to yield nucleoside 5'-phosphates.. Functionally, bidirectionally degrades single-stranded DNA into large acid-insoluble oligonucleotides, which are then degraded further into small acid-soluble oligonucleotides. The protein is Exodeoxyribonuclease 7 small subunit of Streptomyces coelicolor (strain ATCC BAA-471 / A3(2) / M145).